The chain runs to 306 residues: Agmatinase (306 aa).

Mn(2+)-binding residues include H126, D149, H151, D153, D230, and D232.

This sequence belongs to the arginase family. Agmatinase subfamily. It depends on Mn(2+) as a cofactor.

The catalysed reaction is agmatine + H2O = urea + putrescine. It functions in the pathway amine and polyamine biosynthesis; putrescine biosynthesis via agmatine pathway; putrescine from agmatine: step 1/1. Catalyzes the formation of putrescine from agmatine. This chain is Agmatinase, found in Enterobacter sp. (strain 638).